Reading from the N-terminus, the 292-residue chain is Thyroxine 5-deiodinase (292 aa).

Residues 1 to 30 (VVGEGRGALGGAATMLRSLLLHSLRLCAQT) are Cytoplasmic-facing. The helical; Signal-anchor for type II membrane protein transmembrane segment at 31 to 50 (ASCLVLFPRFLGTAFMLWLL) threads the bilayer. Topologically, residues 51–292 (DFLCIRKHLL…QLHGPQPRRV (242 aa)) are extracellular. The active site involves Sec158. Residue Sec158 is a non-standard amino acid, selenocysteine.

This sequence belongs to the iodothyronine deiodinase family. Monomer. Homodimer. May undergo minor heretodimerization with DIO1 and DIO2.

It localises to the cell membrane. The protein localises to the endosome membrane. It carries out the reaction 3,3',5'-triiodo-L-thyronine + iodide + A + H(+) = L-thyroxine + AH2. The catalysed reaction is 3,3'-diiodo-L-thyronine + iodide + A + H(+) = 3,3',5-triiodo-L-thyronine + AH2. The enzyme catalyses 3-iodo-L-thyronine + iodide + A + H(+) = 3,5-diiodo-L-thyronine + AH2. It catalyses the reaction L-thyronine + iodide + A + H(+) = 3-iodo-L-thyronine + AH2. It carries out the reaction 3',5'-diiodo-L-thyronine + iodide + A + H(+) = 3,3',5'-triiodo-L-thyronine + AH2. The catalysed reaction is 3'-iodo-L-thyronine + iodide + A + H(+) = 3,3'-diiodo-L-thyronine + AH2. The enzyme catalyses 3,3',5'-triiodothyronamine + iodide + A + H(+) = 3,3',5,5'-tetraiodothyronamine + AH2. It catalyses the reaction 3',5'-diiodothyronamine + iodide + A + H(+) = 3,3',5'-triiodothyronamine + AH2. It carries out the reaction 3,3'-diiodothyronamine + iodide + A + H(+) = 3,3',5-triiodothyronamine + AH2. The catalysed reaction is 3-iodothyronamine + iodide + A + H(+) = 3,5-diiodothyronamine + AH2. The enzyme catalyses 3'-iodothyronamine + iodide + A + H(+) = 3,3'-diiodothyronamine + AH2. It catalyses the reaction thyronamine + iodide + A + H(+) = 3-iodothyronamine + AH2. Plays a crucial role in the metabolism of thyroid hormones (TH) and has specific roles in TH activation and inactivation by deiodination.Catalyzes the deiodination of L-thyroxine (T4) to 3,3',5'-triiodothyronine (rT3), 3,5,3'-triiodothyronine (T3) to 3,3'-diiodothyronine (3,3'-T2), 3,5-diiodothyronine (3,5-T2) to 3-monoiodothyronine (3-T1), rT3 to 3',5'-diiodothyronine (3',5'-T2) and 3,3'-T2 to 3'-monoiodothyronine (3'-T1) via inner-ring deiodination (IRD). Catalyzes the deiodination of 3-T1 to L-thyronine (T0) via outer-ring deiodination (ORD). Catalyzes the tyrosyl ring deiodinations of 3,3',5,5'-tetraiodothyronamine, 3,3',5'-triiodothyronamine, 3,5,3'-triiodothyronamine, 3,5-diiodothyronamine, 3,3'-diiodothyronamine and 3-iodothyronamine. In Ovis aries (Sheep), this protein is Thyroxine 5-deiodinase (DIO3).